Here is a 34-residue protein sequence, read N- to C-terminus: Photosystem II reaction center protein M (34 aa).

A helical transmembrane segment spans residues Ile-5–Ile-25.

The protein belongs to the PsbM family. PSII is composed of 1 copy each of membrane proteins PsbA, PsbB, PsbC, PsbD, PsbE, PsbF, PsbH, PsbI, PsbJ, PsbK, PsbL, PsbM, PsbT, PsbX, PsbY, PsbZ, Psb30/Ycf12, at least 3 peripheral proteins of the oxygen-evolving complex and a large number of cofactors. It forms dimeric complexes.

It is found in the plastid. The protein resides in the chloroplast thylakoid membrane. One of the components of the core complex of photosystem II (PSII). PSII is a light-driven water:plastoquinone oxidoreductase that uses light energy to abstract electrons from H(2)O, generating O(2) and a proton gradient subsequently used for ATP formation. It consists of a core antenna complex that captures photons, and an electron transfer chain that converts photonic excitation into a charge separation. This subunit is found at the monomer-monomer interface. This chain is Photosystem II reaction center protein M, found in Ceratophyllum demersum (Rigid hornwort).